An 84-amino-acid polypeptide reads, in one-letter code: Hepcidin (84 aa).

The signal sequence occupies residues 1–24 (MALSSQIWAACLLLLLLLASLTSG). Residues 25–54 (SVFPQQTGQLAELQPQDRAGARAGWTPMLQ) constitute a propeptide that is removed on maturation. Intrachain disulfides connect C69-C72, C70-C78, and C73-C81.

This sequence belongs to the hepcidin family. In terms of assembly, interacts with SLC40A1; this interaction promotes SLC40A1 rapid ubiquitination.

Its subcellular location is the secreted. Functionally, liver-produced hormone that constitutes the main circulating regulator of iron absorption and distribution across tissues. Acts by promoting endocytosis and degradation of ferroportin/SLC40A1, leading to the retention of iron in iron-exporting cells and decreased flow of iron into plasma. Controls the major flows of iron into plasma: absorption of dietary iron in the intestine, recycling of iron by macrophages, which phagocytose old erythrocytes and other cells, and mobilization of stored iron from hepatocytes. Has strong antimicrobial activity against E.coli ML35P N.cinerea and weaker against S.epidermidis, S.aureus and group b streptococcus bacteria. Active against the fungus C.albicans. No activity against P.aeruginosa. The sequence is that of Hepcidin (HAMP) from Pongo abelii (Sumatran orangutan).